Consider the following 142-residue polypeptide: Interleukin-3 (142 aa).

Positions M1–Q18 are cleaved as a signal peptide. Residues N33, N88, and N108 are each glycosylated (N-linked (GlcNAc...) asparagine). A disulfide bridge connects residues C34 and C102.

It belongs to the IL-3 family. As to quaternary structure, monomer. As to expression, activated T-cells, mast cells, natural killer cells.

The protein localises to the secreted. In terms of biological role, granulocyte/macrophage colony-stimulating factors are cytokines that act in hematopoiesis by controlling the production, differentiation, and function of 2 related white cell populations of the blood, the granulocytes and the monocytes-macrophages. This CSF induces granulocytes, macrophages, mast cells, stem cells, erythroid cells, eosinophils and megakaryocytes. This is Interleukin-3 (IL3) from Saguinus oedipus (Cotton-top tamarin).